The following is a 521-amino-acid chain: Glucosidase 2 subunit beta (521 aa).

Residues 1–14 (MLLLLLLLLPLCWA) form the signal peptide. A Phosphoserine modification is found at Ser-24. 2 LDL-receptor class A domains span residues 37 to 71 (FTCLDGTATIPFDQVNDDYCDCKDGSDEPGTAACP) and 69 to 113 (ACPN…TVCE). Intrachain disulfides connect Cys-39/Cys-58 and Cys-56/Cys-70. Residue Asp-49 coordinates substrate. Ca(2+) is bound by residues Gln-50, Asp-53, Tyr-55, Asp-57, Asp-63, and Glu-64. Asp-53 contributes to the substrate binding site. A glycan (N-linked (GlcNAc...) asparagine) is linked at Asn-72. Disulfide bonds link Cys-77–Cys-99, Cys-97–Cys-112, and Cys-100–Cys-116. The residue at position 89 (Ser-89) is a Phosphoserine; by PKC. Residues Arg-91, Asp-94, Val-96, Asp-98, Asp-104, and Glu-105 each coordinate Ca(2+). Lys-166 is modified (N6-succinyllysine). Phosphoserine is present on Ser-168. EF-hand domains follow at residues 209–244 (REQERAASAFQELDDNMDGMVSLAELQTHPELDTDG) and 245–290 (DGAL…TDIP). Residues Asp-222, Asn-224, Asp-226, Met-228, and Glu-233 each contribute to the Ca(2+) site. Disordered stretches follow at residues 226–267 (DGMV…DTTS) and 280–350 (YRSE…EKMP). 2 stretches are compositionally biased toward acidic residues: residues 241–253 (DTDGDGALSEEEA) and 308–331 (TEEEEEEEEEPEEEEEEEEEEEEA). Residues 332–343 (PPPLQPPQPPSP) show a composition bias toward pro residues. A phosphoserine; by PKC mark is found at Ser-376 and Ser-383. Residues 406-507 (SQCYELTTNE…ELMTPAACPE (102 aa)) enclose the MRH domain. Cys-408 and Cys-421 are disulfide-bonded. A Phosphoserine; by PKC modification is found at Ser-427. Disulfide bonds link Cys-464-Cys-493 and Cys-478-Cys-505. N-linked (GlcNAc...) asparagine glycosylation occurs at Asn-469. Residues 518–521 (HDEL) carry the Prevents secretion from ER motif.

In terms of assembly, heterodimer of a catalytic alpha subunit (GANAB) and a beta subunit (PRKCSH). Binds glycosylated PTPRC. Expressed in kidney (at protein level).

It localises to the endoplasmic reticulum. It functions in the pathway glycan metabolism; N-glycan metabolism. Functionally, regulatory subunit of glucosidase II that cleaves sequentially the 2 innermost alpha-1,3-linked glucose residues from the Glc(2)Man(9)GlcNAc(2) oligosaccharide precursor of immature glycoproteins. Required for efficient PKD1/Polycystin-1 biogenesis and trafficking to the plasma membrane of the primary cilia. The polypeptide is Glucosidase 2 subunit beta (Mus musculus (Mouse)).